The sequence spans 390 residues: S-adenosylmethionine synthase (390 aa).

ATP is bound at residue H15. D17 lines the Mg(2+) pocket. K(+) is bound at residue E43. L-methionine contacts are provided by E56 and Q99. The interval Q99–R109 is flexible loop. ATP is bound by residues D164 to K166, R230 to F231, D239, R245 to K246, A262, and K266. D239 is a binding site for L-methionine. K270 serves as a coordination point for L-methionine.

This sequence belongs to the AdoMet synthase family. As to quaternary structure, homotetramer; dimer of dimers. Mg(2+) is required as a cofactor. The cofactor is K(+).

The protein resides in the cytoplasm. It catalyses the reaction L-methionine + ATP + H2O = S-adenosyl-L-methionine + phosphate + diphosphate. The protein operates within amino-acid biosynthesis; S-adenosyl-L-methionine biosynthesis; S-adenosyl-L-methionine from L-methionine: step 1/1. Functionally, catalyzes the formation of S-adenosylmethionine (AdoMet) from methionine and ATP. The overall synthetic reaction is composed of two sequential steps, AdoMet formation and the subsequent tripolyphosphate hydrolysis which occurs prior to release of AdoMet from the enzyme. In Photorhabdus laumondii subsp. laumondii (strain DSM 15139 / CIP 105565 / TT01) (Photorhabdus luminescens subsp. laumondii), this protein is S-adenosylmethionine synthase.